Consider the following 880-residue polypeptide: MEQSVSARWLRRYRPVLIILVLIFGIQLFLAYKSVDIGGGSGSGLDVDAAQRSQRDLASNPVIAEPPESLPRPARLTANQLGFQPECDIQAKEAISALQRAKTKDCRQHIAQIACSIQAGRFYAIQLKSSCPSGNHTANVSLGCYRDEKDRRLLGGYYTSFKNSNSPNLCLELCLQSGYPYAGVQYGRECFCGFDTPPKAAKLPDSSCNIKCLGNAREICGGFYAMNIYETGIAKFTAQLAASTPPTGAKRVRIAFLLTINGRALRQVHRLLKALYAPEHVYYIHVDERQDYLYRKLLELEQKFPNIRLARKRFSTIWGGASLLTMLLQCMEDLLKSKWQWDFVINLSESDFPVKTLDKLVDFLSANRGRNFVKGHGRETQKFIQKQGLDRTFVECDTHMWRIGDRKLPAGIQVDGGSDWVALSRPFVAYVTHPKKEDELLQALLKLFRHTLLPAESFFHTVLRNTHHCHTYVDNNLHVTNWKRKQGCKCQYKHVVDWCGCSPNDFMPDDWPRLLATEQKSLFFARKFEPIINQAVLLQLEEWLYGPYTSEYLNLHGYWQSLYHHEDVHGSADDLVRSVGDSLMRLAGSQARVDPLELLELTHYLHRDQYKGFLVRFSARRATGQDVQLETRVRPVQHGKLARNARFSKRLRNFEVSTDFDQKEQVARNFGKLLGPQSDLVLSYTYQGSTDSGAASHSYNLTLLWIDPLGRLQDFNELHVEDSSTDLINHSKTLLSHPITPGVWTAKLIGRSSIYAQLKFLISPMAYGNGEPLETTPEAEKRNGGLGIALPDDFELPVEWQQHLHTDDEQFSLREEALANGKLTGPPLHRWIDDLVGKFFQLRESCVVDAGTELSLPLCSDAPWSSLAPDPKSDVDALLK.

Residues 1-14 (MEQSVSARWLRRYR) are Cytoplasmic-facing. A helical; Signal-anchor for type II membrane protein membrane pass occupies residues 15–35 (PVLIILVLIFGIQLFLAYKSV). Over 36–880 (DIGGGSGSGL…PKSDVDALLK (845 aa)) the chain is Lumenal. Disulfide bonds link C87–C115, C131–C469, C488–C501, and C490–C499. 2 N-linked (GlcNAc...) asparagine glycosylation sites follow: N135 and N139. A WSC domain is found at 138-232 (ANVSLGCYRD…FYAMNIYETG (95 aa)). Residues D287 and 316–318 (TIW) contribute to the UDP-alpha-D-xylose site. A glycan (N-linked (GlcNAc...) asparagine) is linked at N346. 419 to 420 (DW) lines the UDP-alpha-D-xylose pocket. UDP-alpha-D-xylose is bound by residues S502 and 526–527 (RK). 2 N-linked (GlcNAc...) asparagine glycosylation sites follow: N700 and N729. An intrachain disulfide couples C846 to C859.

The protein belongs to the glycosyltransferase 14 family. XylT subfamily. Requires Ca(2+) as cofactor. It depends on Mn(2+) as a cofactor. Mg(2+) serves as cofactor.

Its subcellular location is the endoplasmic reticulum membrane. The protein localises to the golgi apparatus membrane. The enzyme catalyses UDP-alpha-D-xylose + L-seryl-[protein] = 3-O-(beta-D-xylosyl)-L-seryl-[protein] + UDP + H(+). It functions in the pathway glycan metabolism; chondroitin sulfate biosynthesis. Its pathway is glycan metabolism; heparan sulfate biosynthesis. Its function is as follows. Catalyzes the first step in biosynthesis of glycosaminoglycan. Transfers D-xylose from UDP-D-xylose to specific serine residues of the core protein. This Drosophila pseudoobscura pseudoobscura (Fruit fly) protein is Xylosyltransferase oxt.